The sequence spans 406 residues: Glutamyl-tRNA reductase (406 aa).

Residues 51 to 54 (TCNR), Ser-101, 106 to 108 (ESE), and Gln-112 contribute to the substrate site. Residue Cys-52 is the Nucleophile of the active site. 180-185 (GAGSIG) is a binding site for NADP(+).

This sequence belongs to the glutamyl-tRNA reductase family. Homodimer.

The enzyme catalyses (S)-4-amino-5-oxopentanoate + tRNA(Glu) + NADP(+) = L-glutamyl-tRNA(Glu) + NADPH + H(+). It functions in the pathway porphyrin-containing compound metabolism; protoporphyrin-IX biosynthesis; 5-aminolevulinate from L-glutamyl-tRNA(Glu): step 1/2. Functionally, catalyzes the NADPH-dependent reduction of glutamyl-tRNA(Glu) to glutamate 1-semialdehyde (GSA). This chain is Glutamyl-tRNA reductase, found in Caldivirga maquilingensis (strain ATCC 700844 / DSM 13496 / JCM 10307 / IC-167).